We begin with the raw amino-acid sequence, 238 residues long: Ribonuclease PH (238 aa).

Residues Arg-86 and 124–126 (GTR) contribute to the phosphate site.

It belongs to the RNase PH family. In terms of assembly, homohexameric ring arranged as a trimer of dimers.

The enzyme catalyses tRNA(n+1) + phosphate = tRNA(n) + a ribonucleoside 5'-diphosphate. Phosphorolytic 3'-5' exoribonuclease that plays an important role in tRNA 3'-end maturation. Removes nucleotide residues following the 3'-CCA terminus of tRNAs; can also add nucleotides to the ends of RNA molecules by using nucleoside diphosphates as substrates, but this may not be physiologically important. Probably plays a role in initiation of 16S rRNA degradation (leading to ribosome degradation) during starvation. This Salmonella agona (strain SL483) protein is Ribonuclease PH.